Here is a 912-residue protein sequence, read N- to C-terminus: Phosphoenolpyruvate carboxylase (912 aa).

Catalysis depends on residues histidine 138 and lysine 575.

The protein belongs to the PEPCase type 1 family. The cofactor is Mg(2+).

The catalysed reaction is oxaloacetate + phosphate = phosphoenolpyruvate + hydrogencarbonate. In terms of biological role, forms oxaloacetate, a four-carbon dicarboxylic acid source for the tricarboxylic acid cycle. The protein is Phosphoenolpyruvate carboxylase of Lactobacillus acidophilus (strain ATCC 700396 / NCK56 / N2 / NCFM).